A 289-amino-acid polypeptide reads, in one-letter code: 1D-myo-inositol 2-acetamido-2-deoxy-alpha-D-glucopyranoside deacetylase 1 (289 aa).

The Zn(2+) site is built by His4, Asp7, and His140.

It belongs to the MshB deacetylase family. Zn(2+) serves as cofactor.

It carries out the reaction 1D-myo-inositol 2-acetamido-2-deoxy-alpha-D-glucopyranoside + H2O = 1D-myo-inositol 2-amino-2-deoxy-alpha-D-glucopyranoside + acetate. Its function is as follows. Catalyzes the deacetylation of 1D-myo-inositol 2-acetamido-2-deoxy-alpha-D-glucopyranoside (GlcNAc-Ins) in the mycothiol biosynthesis pathway. The chain is 1D-myo-inositol 2-acetamido-2-deoxy-alpha-D-glucopyranoside deacetylase 1 from Frankia alni (strain DSM 45986 / CECT 9034 / ACN14a).